The primary structure comprises 439 residues: 3-phosphoshikimate 1-carboxyvinyltransferase (439 aa).

3 residues coordinate 3-phosphoshikimate: lysine 27, serine 28, and arginine 32. Lysine 27 is a binding site for phosphoenolpyruvate. Glycine 101 and arginine 130 together coordinate phosphoenolpyruvate. The 3-phosphoshikimate site is built by serine 175, glutamine 177, aspartate 326, and lysine 353. Residue glutamine 177 participates in phosphoenolpyruvate binding. The Proton acceptor role is filled by aspartate 326. 2 residues coordinate phosphoenolpyruvate: arginine 357 and arginine 399.

The protein belongs to the EPSP synthase family. In terms of assembly, monomer.

The protein resides in the cytoplasm. The catalysed reaction is 3-phosphoshikimate + phosphoenolpyruvate = 5-O-(1-carboxyvinyl)-3-phosphoshikimate + phosphate. It participates in metabolic intermediate biosynthesis; chorismate biosynthesis; chorismate from D-erythrose 4-phosphate and phosphoenolpyruvate: step 6/7. Its function is as follows. Catalyzes the transfer of the enolpyruvyl moiety of phosphoenolpyruvate (PEP) to the 5-hydroxyl of shikimate-3-phosphate (S3P) to produce enolpyruvyl shikimate-3-phosphate and inorganic phosphate. In Synechococcus sp. (strain CC9311), this protein is 3-phosphoshikimate 1-carboxyvinyltransferase.